A 361-amino-acid polypeptide reads, in one-letter code: Free fatty acid receptor 4 (361 aa).

Residues 1-45 are Extracellular-facing; it reads MSPECARAAGDAPLRSLEQANRTRFSFFSDVKGDHRLLLAAVETT. N21 is a glycosylation site (N-linked (GlcNAc...) asparagine). Residues 46–66 form a helical membrane-spanning segment; that stretch reads VLALIFAVSLLGNVCALVLVA. The Cytoplasmic portion of the chain corresponds to 67 to 77; sequence RRRRRGTTACL. The helical transmembrane segment at 78-98 threads the bilayer; that stretch reads VLNLFCADLLFISAIPLVLAV. Topologically, residues 99 to 112 are extracellular; that stretch reads RWTEAWLLGPVACH. Cysteines 111 and 194 form a disulfide. A helical membrane pass occupies residues 113–133; the sequence is LLFYLMTLSGSVTILTLAAVS. Topologically, residues 134 to 156 are cytoplasmic; that stretch reads LERMVCIVHLQRGVRGPGRRARA. A helical membrane pass occupies residues 157–177; it reads VLLTLIWGYSAVAALPLCVFF. The Extracellular portion of the chain corresponds to 178–204; that stretch reads RVVPQRLPGADQEISICTLIWPTIAGE. The chain crosses the membrane as a helical span at residues 205-225; it reads ISWDVSFVTLNFLVPGLVIVI. The Cytoplasmic segment spans residues 226–268; sequence SYSKILQITKASRKRLTVSLAYSESHQIRVSQQDFRLFRTLFL. The helical transmembrane segment at 269 to 289 threads the bilayer; sequence LMVSFFIMWSPIIITILLILI. Topologically, residues 290–295 are extracellular; sequence QNFKQD. Residues 296-316 form a helical membrane-spanning segment; the sequence is LVIWPSLFFWVVAFTFANSAL. Topologically, residues 317-361 are cytoplasmic; it reads NPILYNMTLCRNEWKKIFCCFWFPEKGAILTDTSVKRNDLSVISG. 2 positions are modified to phosphothreonine: T347 and T349. 3 positions are modified to phosphoserine: S350, S357, and S360.

It belongs to the G-protein coupled receptor 1 family. In terms of assembly, interacts (via C-terminus) with ARRB2 following LCFAs stimulation. Post-translationally, phosphorylated at two clusters of Ser and Thr residues located in the intracellular C-terminus. Prerequisite for FFAR4 internalization via an ARRB2-dependent pathway. In terms of tissue distribution, highly expressed in lung and colon.

The protein localises to the cell membrane. Its subcellular location is the endosome membrane. It localises to the lysosome membrane. The protein resides in the cell projection. It is found in the cilium membrane. Functionally, G-protein-coupled receptor for long-chain fatty acids (LCFAs) with a major role in adipogenesis, energy metabolism and inflammation. Signals via G-protein and beta-arrestin pathways. LCFAs sensing initiates activation of phosphoinositidase C-linked G proteins GNAQ and GNA11 (G(q)/G(11)), inducing a variety of cellular responses via second messenger pathways such as intracellular calcium mobilization, modulation of cyclic adenosine monophosphate (cAMP) production, and mitogen-activated protein kinases (MAPKs). After LCFAs binding, associates with beta-arrestin ARRB2 that acts as an adapter protein coupling the receptor to specific downstream signaling pathways, as well as mediating receptor endocytosis. In response to dietary fats, plays an important role in the regulation of adipocyte proliferation and differentiation. Acts as a receptor for omega-3 polyunsaturated fatty acids (PUFAs) at primary cilium of perivascular preadipocytes, initiating an adipogenic program via cAMP and CTCF-dependent chromatin remodeling that ultimately results in transcriptional activation of adipogenic genes and cell cycle entry. Induces differentiation of brown and beige adipocytes probably via autocrine and endocrine functions of FGF21 hormone. Contributes to the thermogenic activation of brown adipose tissue and the browning of white adipose tissue. Activates brown adipocytes by initiating intracellular calcium signaling leading to mitochondrial depolarization and fission, and overall increased mitochondrial respiration. Consequently stimulates fatty acid uptake and oxidation in mitochondria together with UCP1-mediated thermogenic respiration, eventually reducing fat mass. Regulates bi-potential differentiation of bone marrow mesenchymal stem cells toward osteoblasts or adipocytes likely by up-regulating distinct integrins. In response to dietary fats regulates hormone secretion and appetite. Stimulates GIP and GLP1 secretion from enteroendocrine cells as well as GCG secretion in pancreatic alpha cells, thereby playing a role in the regulation of blood glucose levels. Negatively regulates glucose-induced SST secretion in pancreatic delta cells. Mediates LCFAs inhibition of GHRL secretion, an appetite-controlling hormone. In taste buds, contributes to sensing of dietary fatty acids by the gustatory system. During the inflammatory response, promotes anti-inflammatory M2 macrophage differentiation in adipose tissue. Mediates the anti-inflammatory effects of omega-3 PUFAs via inhibition of NLRP3 inflammasome activation. In this pathway, interacts with adapter protein ARRB2 and inhibits the priming step triggered by Toll-like receptors (TLRs) at the level of TAK1 and TAB1. Further inhibits the activation step when ARRB2 directly associates with NLRP3, leading to inhibition of pro-inflammatory cytokine release. Mediates LCFAs anti-apoptotic effects. This Macaca fascicularis (Crab-eating macaque) protein is Free fatty acid receptor 4 (FFAR4).